Here is a 527-residue protein sequence, read N- to C-terminus: AAA ATPase forming ring-shaped complexes (527 aa).

The segment covering 1 to 18 (MVTMSSPTDSSPSNSFSD) has biased composition (low complexity). The segment at 1–38 (MVTMSSPTDSSPSNSFSDFNREEQSRLSDEVRQLKRTN) is disordered. Over residues 19–33 (FNREEQSRLSDEVRQ) the composition is skewed to basic and acidic residues. Positions 21-53 (REEQSRLSDEVRQLKRTNSDLGARNAKLAEMLK) form a coiled coil. 257-262 (GCGKTL) contributes to the ATP binding site. Residues 492 to 515 (DENQQSEDLPNTSNPDEWSRITGR) are disordered. Residues 497-507 (SEDLPNTSNPD) show a composition bias toward polar residues.

This sequence belongs to the AAA ATPase family. Homohexamer. Assembles into a hexameric ring structure.

The polypeptide is AAA ATPase forming ring-shaped complexes (Corynebacterium glutamicum (strain R)).